The sequence spans 101 residues: NAD(P)H-quinone oxidoreductase subunit 4L, chloroplastic (101 aa).

Transmembrane regions (helical) follow at residues 2–22 (ILEH…YGLI), 32–52 (MCLE…SDFF), and 61–81 (IFCI…LAIV).

Belongs to the complex I subunit 4L family. As to quaternary structure, NDH is composed of at least 16 different subunits, 5 of which are encoded in the nucleus.

It is found in the plastid. The protein localises to the chloroplast thylakoid membrane. It carries out the reaction a plastoquinone + NADH + (n+1) H(+)(in) = a plastoquinol + NAD(+) + n H(+)(out). The enzyme catalyses a plastoquinone + NADPH + (n+1) H(+)(in) = a plastoquinol + NADP(+) + n H(+)(out). In terms of biological role, NDH shuttles electrons from NAD(P)H:plastoquinone, via FMN and iron-sulfur (Fe-S) centers, to quinones in the photosynthetic chain and possibly in a chloroplast respiratory chain. The immediate electron acceptor for the enzyme in this species is believed to be plastoquinone. Couples the redox reaction to proton translocation, and thus conserves the redox energy in a proton gradient. In Olimarabidopsis pumila (Dwarf rocket), this protein is NAD(P)H-quinone oxidoreductase subunit 4L, chloroplastic.